A 254-amino-acid polypeptide reads, in one-letter code: Ubiquinone/menaquinone biosynthesis C-methyltransferase UbiE (254 aa).

S-adenosyl-L-methionine-binding positions include Thr77, Asp98, 126 to 127 (NA), and Ser143.

This sequence belongs to the class I-like SAM-binding methyltransferase superfamily. MenG/UbiE family.

It catalyses the reaction a 2-demethylmenaquinol + S-adenosyl-L-methionine = a menaquinol + S-adenosyl-L-homocysteine + H(+). The catalysed reaction is a 2-methoxy-6-(all-trans-polyprenyl)benzene-1,4-diol + S-adenosyl-L-methionine = a 5-methoxy-2-methyl-3-(all-trans-polyprenyl)benzene-1,4-diol + S-adenosyl-L-homocysteine + H(+). It participates in quinol/quinone metabolism; menaquinone biosynthesis; menaquinol from 1,4-dihydroxy-2-naphthoate: step 2/2. Its pathway is cofactor biosynthesis; ubiquinone biosynthesis. Its function is as follows. Methyltransferase required for the conversion of demethylmenaquinol (DMKH2) to menaquinol (MKH2) and the conversion of 2-polyprenyl-6-methoxy-1,4-benzoquinol (DDMQH2) to 2-polyprenyl-3-methyl-6-methoxy-1,4-benzoquinol (DMQH2). The protein is Ubiquinone/menaquinone biosynthesis C-methyltransferase UbiE of Blochmanniella floridana.